A 476-amino-acid polypeptide reads, in one-letter code: Exodeoxyribonuclease 7 large subunit (476 aa).

The protein belongs to the XseA family. Heterooligomer composed of large and small subunits.

It localises to the cytoplasm. The catalysed reaction is Exonucleolytic cleavage in either 5'- to 3'- or 3'- to 5'-direction to yield nucleoside 5'-phosphates.. Functionally, bidirectionally degrades single-stranded DNA into large acid-insoluble oligonucleotides, which are then degraded further into small acid-soluble oligonucleotides. The sequence is that of Exodeoxyribonuclease 7 large subunit from Bartonella tribocorum (strain CIP 105476 / IBS 506).